The primary structure comprises 41 residues: Photosystem I reaction center subunit IX (41 aa).

The chain crosses the membrane as a helical span at residues 7–27 (YLSTAPVLLTLWMTFTAGFII).

It belongs to the PsaJ family.

The protein resides in the plastid. It is found in the chloroplast thylakoid membrane. Functionally, may help in the organization of the PsaE and PsaF subunits. In Trieres chinensis (Marine centric diatom), this protein is Photosystem I reaction center subunit IX.